Reading from the N-terminus, the 39-residue chain is Photosystem II reaction center protein Psb30 (39 aa).

Residues 12–32 (IFQLTFVGLIVIAGPIVIAVL) form a helical membrane-spanning segment.

It belongs to the Psb30/Ycf12 family. As to quaternary structure, PSII is composed of 1 copy each of membrane proteins PsbA, PsbB, PsbC, PsbD, PsbE, PsbF, PsbH, PsbI, PsbJ, PsbK, PsbL, PsbM, PsbT, PsbX, PsbY, PsbZ, Psb30/Ycf12, peripheral proteins PsbO, CyanoQ (PsbQ), PsbU, PsbV and a large number of cofactors. It forms dimeric complexes.

The protein resides in the cellular thylakoid membrane. Its function is as follows. A core subunit of photosystem II (PSII), probably helps stabilize the reaction center. This is Photosystem II reaction center protein Psb30 from Crocosphaera subtropica (strain ATCC 51142 / BH68) (Cyanothece sp. (strain ATCC 51142)).